A 105-amino-acid polypeptide reads, in one-letter code: Heat shock protein HspQ (105 aa).

The interval 77–105 (MRDEHPEQPSMDELARTIRKQLQAPRLRN) is disordered.

Belongs to the HspQ family.

The protein resides in the cytoplasm. Its function is as follows. Involved in the degradation of certain denaturated proteins, including DnaA, during heat shock stress. This chain is Heat shock protein HspQ, found in Salmonella arizonae (strain ATCC BAA-731 / CDC346-86 / RSK2980).